The following is a 298-amino-acid chain: Probable GTP 3',8-cyclase (298 aa).

The Radical SAM core domain maps to 4–230 (KFGREIRSLR…RKKYIVDGLE (227 aa)). Arginine 13 serves as a coordination point for GTP. [4Fe-4S] cluster-binding residues include cysteine 20 and cysteine 24. Tyrosine 26 contacts S-adenosyl-L-methionine. Residue cysteine 27 participates in [4Fe-4S] cluster binding. Lysine 61 lines the GTP pocket. Glycine 65 contacts S-adenosyl-L-methionine. Threonine 91 is a GTP binding site. Serine 115 contacts S-adenosyl-L-methionine. Lysine 152 lines the GTP pocket. Residues cysteine 243 and cysteine 246 each contribute to the [4Fe-4S] cluster site. 248 to 250 (RIR) lines the GTP pocket. [4Fe-4S] cluster is bound at residue cysteine 260.

Belongs to the radical SAM superfamily. MoaA family. [4Fe-4S] cluster is required as a cofactor.

The catalysed reaction is GTP + AH2 + S-adenosyl-L-methionine = (8S)-3',8-cyclo-7,8-dihydroguanosine 5'-triphosphate + 5'-deoxyadenosine + L-methionine + A + H(+). Its pathway is cofactor biosynthesis; molybdopterin biosynthesis. Its function is as follows. Catalyzes the cyclization of GTP to (8S)-3',8-cyclo-7,8-dihydroguanosine 5'-triphosphate. The chain is Probable GTP 3',8-cyclase from Methanocaldococcus jannaschii (strain ATCC 43067 / DSM 2661 / JAL-1 / JCM 10045 / NBRC 100440) (Methanococcus jannaschii).